The sequence spans 238 residues: MDVPTSSTDSQEVKPIMPIRTKAACKFYPPHILCGKGAKTNKRGKRGGAQKASTKKDIGETTPPVAKKSKVAKEPTMLAAAAAPEAAASPESSAAAAAPEAAASPESSAAAAAPEAAASPESSAAAAAPEAAASLESSAAAAAPEAAAAPATPAAPEAAAAPEVAAAPATPAAPEATAAPAAPEAATTPAAPEAPAAAPAVEEEEMVWEAAAVVGEAAVKPPEEEPTSGEAVATTTMT.

The segment at 35–238 is disordered; sequence GKGAKTNKRG…GEAVATTTMT (204 aa). The segment covering 39 to 48 has biased composition (basic residues); it reads KTNKRGKRGG. 8 tandem repeats follow at residues 79–93, 94–108, 109–123, 124–138, 153–158, 171–176, 180–185, and 189–194. The 4 X 15 AA tandem repeats of A-A-A-A-A-P-E-A-A-A-S-[PL]-E-S-S stretch occupies residues 79–148; the sequence is AAAAAPEAAA…AAAAAPEAAA (70 aa). Composition is skewed to low complexity over residues 79–200 and 208–220; these read AAAA…AAPA and WEAA…AAVK. The segment at 153–194 is 4 X 6 AA repeats of P-A-A-P-E-A; it reads PAAPEAAAAPEVAAAPATPAAPEATAAPAAPEAATTPAAPEA.

In terms of tissue distribution, specifically expressed in testis (at protein level).

The protein resides in the cytoplasm. The protein localises to the nucleus. It localises to the nucleoplasm. The protein is Testis-specific gene A8 protein of Mus musculus (Mouse).